Reading from the N-terminus, the 355-residue chain is GPN-loop GTPase 1 (355 aa).

The disordered stretch occupies residues 1 to 30; sequence MAEKAENLPSSSAEASEEPSPQTGPNVNQK. Low complexity predominate over residues 9 to 21; that stretch reads PSSSAEASEEPSP. Residue 40-45 coordinates GTP; the sequence is GSGKTT. Residues 97–99 carry the Gly-Pro-Asn (GPN)-loop; involved in dimer interface motif; it reads GPN. 200-203 is a binding site for GTP; the sequence is NKAD. A coiled-coil region spans residues 286–311; sequence EKVLAEKKLLDEEERKKRDEETLKGK.

The protein belongs to the GPN-loop GTPase family. As to quaternary structure, heterodimer with GPN3. Binds to RNA polymerase II (RNAPII).

The protein resides in the cytoplasm. Its subcellular location is the nucleus. Its function is as follows. Small GTPase required for proper nuclear import of RNA polymerase II (RNAPII). May act at an RNAP assembly step prior to nuclear import. The chain is GPN-loop GTPase 1 from Caenorhabditis elegans.